Reading from the N-terminus, the 79-residue chain is Exodeoxyribonuclease 7 small subunit (79 aa).

This sequence belongs to the XseB family. Heterooligomer composed of large and small subunits.

The protein resides in the cytoplasm. It carries out the reaction Exonucleolytic cleavage in either 5'- to 3'- or 3'- to 5'-direction to yield nucleoside 5'-phosphates.. Functionally, bidirectionally degrades single-stranded DNA into large acid-insoluble oligonucleotides, which are then degraded further into small acid-soluble oligonucleotides. This chain is Exodeoxyribonuclease 7 small subunit, found in Haemophilus influenzae (strain PittGG).